Here is a 135-residue protein sequence, read N- to C-terminus: Thyrostimulin beta-5 subunit (135 aa).

The signal sequence occupies residues 1-19 (MVMPLVLSLALTPPPLCHA). 5 cysteine pairs are disulfide-bonded: Cys30-Cys87, Cys54-Cys102, Cys63-Cys118, Cys67-Cys120, and Cys123-Cys130.

The protein belongs to the glycoprotein hormones subunit beta family. In terms of assembly, heterodimer with GPHA2; non-covalently-linked. As to expression, expressed by the venom duct.

It is found in the secreted. In Conus victoriae (Queen Victoria cone), this protein is Thyrostimulin beta-5 subunit.